A 267-amino-acid chain; its full sequence is Acyl-[acyl-carrier-protein]--UDP-N-acetylglucosamine O-acyltransferase (267 aa).

It belongs to the transferase hexapeptide repeat family. LpxA subfamily. Homotrimer.

The protein localises to the cytoplasm. It carries out the reaction a (3R)-hydroxyacyl-[ACP] + UDP-N-acetyl-alpha-D-glucosamine = a UDP-3-O-[(3R)-3-hydroxyacyl]-N-acetyl-alpha-D-glucosamine + holo-[ACP]. It functions in the pathway glycolipid biosynthesis; lipid IV(A) biosynthesis; lipid IV(A) from (3R)-3-hydroxytetradecanoyl-[acyl-carrier-protein] and UDP-N-acetyl-alpha-D-glucosamine: step 1/6. Its function is as follows. Involved in the biosynthesis of lipid A, a phosphorylated glycolipid that anchors the lipopolysaccharide to the outer membrane of the cell. This is Acyl-[acyl-carrier-protein]--UDP-N-acetylglucosamine O-acyltransferase from Hamiltonella defensa subsp. Acyrthosiphon pisum (strain 5AT).